The chain runs to 180 residues: Negative modulator of initiation of replication (180 aa).

3 interaction with DNA regions span residues 86 to 87, 115 to 119, and 149 to 155; these read AV, RTRVY, and NTNTGRK.

Belongs to the SeqA family. In terms of assembly, homodimer. Polymerizes to form helical filaments.

The protein localises to the cytoplasm. In terms of biological role, negative regulator of replication initiation, which contributes to regulation of DNA replication and ensures that replication initiation occurs exactly once per chromosome per cell cycle. Binds to pairs of hemimethylated GATC sequences in the oriC region, thus preventing assembly of replication proteins and re-initiation at newly replicated origins. Repression is relieved when the region becomes fully methylated. This is Negative modulator of initiation of replication from Salmonella typhimurium (strain LT2 / SGSC1412 / ATCC 700720).